The primary structure comprises 344 residues: 2,3,4,5-tetrahydropyridine-2,6-dicarboxylate N-succinyltransferase (344 aa).

Glu-205 contacts Mg(2+). Residue Glu-221 is the Acyl-anhydride intermediate of the active site. Succinyl-CoA is bound by residues Arg-223, Gly-238, Ser-241, Ala-264, 279–280, Gly-287, Lys-304, and 317–320; these read EA and RRNS.

It belongs to the type 2 tetrahydrodipicolinate N-succinyltransferase family. In terms of assembly, homotrimer.

Its subcellular location is the cytoplasm. The catalysed reaction is (S)-2,3,4,5-tetrahydrodipicolinate + succinyl-CoA + H2O = (S)-2-succinylamino-6-oxoheptanedioate + CoA. It participates in amino-acid biosynthesis; L-lysine biosynthesis via DAP pathway; LL-2,6-diaminopimelate from (S)-tetrahydrodipicolinate (succinylase route): step 1/3. In terms of biological role, catalyzes the conversion of the cyclic tetrahydrodipicolinate (THDP) into the acyclic N-succinyl-L-2-amino-6-oxopimelate using succinyl-CoA. The protein is 2,3,4,5-tetrahydropyridine-2,6-dicarboxylate N-succinyltransferase of Pseudomonas paraeruginosa (strain DSM 24068 / PA7) (Pseudomonas aeruginosa (strain PA7)).